A 277-amino-acid polypeptide reads, in one-letter code: MDNAVDRHVFYISDGTAITAEVLGHAVMSQFPVTISSITLPFVENESRARAVKDQIDAIYHQTGVRPLVFYSIVLPEIRAIILQSEGFCQDIVQALVAPLQQEMQLDPTPIAHRTHGLNPNNLNKYDARIAAIDYTLAHDDGISLRNLDQAQVILLGVSRCGKTPTSLYLAMQFGIRAANYPFIADDMDNLVLPASLKPLQHKLFGLTIDPERLAAIREERRENSRYASLRQCRMEVAEVEALYRKNQIPWINSTNYSVEEIATKILDIMGLSRRMY.

157–164 (GVSRCGKT) contributes to the ADP binding site.

It belongs to the pyruvate, phosphate/water dikinase regulatory protein family. PSRP subfamily.

The catalysed reaction is [pyruvate, water dikinase] + ADP = [pyruvate, water dikinase]-phosphate + AMP + H(+). It catalyses the reaction [pyruvate, water dikinase]-phosphate + phosphate + H(+) = [pyruvate, water dikinase] + diphosphate. Its function is as follows. Bifunctional serine/threonine kinase and phosphorylase involved in the regulation of the phosphoenolpyruvate synthase (PEPS) by catalyzing its phosphorylation/dephosphorylation. This is Phosphoenolpyruvate synthase regulatory protein from Escherichia coli O7:K1 (strain IAI39 / ExPEC).